We begin with the raw amino-acid sequence, 221 residues long: Carbonic anhydrase (221 aa).

4 residues coordinate Zn(2+): cysteine 38, aspartate 40, histidine 99, and cysteine 102.

This sequence belongs to the beta-class carbonic anhydrase family. Zn(2+) serves as cofactor.

The catalysed reaction is hydrogencarbonate + H(+) = CO2 + H2O. This is Carbonic anhydrase (cynT) from Helicobacter pylori (strain ATCC 700392 / 26695) (Campylobacter pylori).